Here is a 1060-residue protein sequence, read N- to C-terminus: RNA-binding protein 27 (1060 aa).

Basic and acidic residues-rich tracts occupy residues 91-102 (LVQEKEEIKEEV) and 124-143 (TRSE…DGKW). Disordered stretches follow at residues 91–143 (LVQE…DGKW) and 162–235 (WRRG…GAQS). Over residues 165-185 (GRSKSRSKSRGLSRSRSRSRG) the composition is skewed to basic residues. Over residues 186-211 (RSKDRDPNRNVEHRERSKFKSERNDL) the composition is skewed to basic and acidic residues. Residues 225–235 (SSEQYSSGAQS) are compositionally biased toward polar residues. The C3H1-type zinc finger occupies 273 to 301 (LPPKRRCRDYDERGFCVLGDLCQFDHGND). Composition is skewed to pro residues over residues 319 to 356 (PPPG…PGPG) and 371 to 384 (QPPP…PRPP). Positions 319 to 412 (PPPGLPPPPP…PNLASVGTRL (94 aa)) are disordered. The segment covering 386 to 402 (TQSSLINSRDQPGTSAV) has biased composition (polar residues). The residue at position 447 (T447) is a Phosphothreonine. R455 bears the Omega-N-methylarginine mark. The tract at residues 565 to 592 (MSGLEGPLTKKPWLGKQGNNNQNKPGFL) is disordered. Residues 579–588 (GKQGNNNQNK) are compositionally biased toward low complexity. The 75-residue stretch at 600-674 (TKLEVKKIPQ…RFIRVLWHRE (75 aa)) folds into the RRM domain. Residues 809–886 (VQEVLKKKQE…KDELKTSSAV (78 aa)) are a coiled coil. S927 is subject to Phosphoserine. Disordered stretches follow at residues 940-968 (PVGR…SLNH) and 1006-1060 (DRRL…SWRR). Phosphoserine occurs at positions 1012 and 1020. The span at 1024 to 1053 (ETEEEEVKEEETETSDLFLPDDDDEDEDEY) shows a compositional bias: acidic residues.

The protein localises to the cytoplasm. The protein resides in the nucleus speckle. In terms of biological role, may be involved in the turnover of nuclear polyadenylated (pA+) RNA. The protein is RNA-binding protein 27 of Homo sapiens (Human).